A 199-amino-acid polypeptide reads, in one-letter code: Recombination protein RecR (199 aa).

A C4-type zinc finger spans residues 57–72 (CEICGNMDTENICRIC). The Toprim domain maps to 80–175 (SVIAIVETVA…KISRLASGIP (96 aa)).

The protein belongs to the RecR family.

Functionally, may play a role in DNA repair. It seems to be involved in an RecBC-independent recombinational process of DNA repair. It may act with RecF and RecO. The chain is Recombination protein RecR from Rickettsia canadensis (strain McKiel).